Consider the following 174-residue polypeptide: RNA pyrophosphohydrolase (174 aa).

The region spanning 6 to 149 (GYRPNVGIIL…KRDVYLGALK (144 aa)) is the Nudix hydrolase domain. The short motif at 38–59 (GGIKPGESPETAMYRELYEEVG) is the Nudix box element.

It belongs to the Nudix hydrolase family. RppH subfamily. Requires a divalent metal cation as cofactor.

Accelerates the degradation of transcripts by removing pyrophosphate from the 5'-end of triphosphorylated RNA, leading to a more labile monophosphorylated state that can stimulate subsequent ribonuclease cleavage. The chain is RNA pyrophosphohydrolase from Neisseria meningitidis serogroup B (strain ATCC BAA-335 / MC58).